We begin with the raw amino-acid sequence, 977 residues long: GAS2-like protein pickled eggs (977 aa).

The region spanning 20-159 (EAMREDLAEW…CLLEVARRGA (140 aa)) is the Calponin-homology (CH) domain. The interval 218-245 (VETDLYDDSDDSETEDDGDQNPVLMYGP) is disordered. Over residues 221–236 (DLYDDSDDSETEDDGD) the composition is skewed to acidic residues. The region spanning 252–324 (NDLKSLDEMV…HYLDKHDPCR (73 aa)) is the GAR domain. Disordered stretches follow at residues 397 to 543 (PTLQ…SEIS), 557 to 624 (AQKR…VCDG), 666 to 685 (VANT…RSPL), 693 to 803 (IDNS…KGRS), and 910 to 977 (NLER…TELY). 2 stretches are compositionally biased toward polar residues: residues 399-428 (LQNG…NQQA) and 436-454 (ATGS…QLLG). Residues 502–527 (GGSGVGSAAGGVSSGSAGSGVAGEQG) show a composition bias toward gly residues. Polar residues predominate over residues 577–589 (RLDQTSSDSQISP). Over residues 601 to 620 (ILEEEDLNGQDREEDQEDYS) the composition is skewed to acidic residues. Composition is skewed to polar residues over residues 666–677 (VANTMGNPTPNL) and 731–741 (TRNSTGATTTP). The span at 928–953 (SSAASSCESNNSNAGAGSGAAAGSAS) shows a compositional bias: low complexity.

The protein belongs to the GAS2 family. In terms of tissue distribution, expressed in the ovary and the ring canals of the germline cells. In larvae, expressed in the notal region of the wing disk.

It localises to the cytoplasm. The protein localises to the cytoskeleton. Its subcellular location is the cell cortex. Functionally, essential for development and viability. Required for ovary development and oogenesis, and is essential for the development of the indirect flight muscles. May act as a negative regulator of the Notch signaling pathway in certain tissues, such as the muscle precursors and ovaries. May function as a linker protein between the actin and microtubule cytoskeletons. The protein is GAS2-like protein pickled eggs of Drosophila melanogaster (Fruit fly).